A 423-amino-acid polypeptide reads, in one-letter code: Osteomodulin (423 aa).

Residues 1 to 20 (MGCLRPIYVLFFCFVVRVYG) form the signal peptide. Sulfotyrosine occurs at positions 22, 25, 31, 39, 51, and 77. Residues 53 to 91 (APFYQNILGCAKECFCPTNFPTSMYCDNRKLKTIPDIPM) enclose the LRRNT domain. 11 LRR repeats span residues 92-113 (HIQQ…SFIN), 116-129 (HLKE…KIKS), 142-164 (NLQQ…PKSL), 165-184 (ERLL…AMDG), 187-207 (NVTM…KGKI), 213-233 (KLMQ…GLPL), 234-255 (SLMY…YFQK), 258-279 (KLHA…IFNL), 281-294 (NLIE…KLKQ), 301-322 (NLEH…MMCP), and 331-353 (HLTY…IFFC). 2 N-linked (GlcNAc...) asparagine glycosylation sites follow: Asn113 and Asn121. Asn187 is a glycosylation site (N-linked (GlcNAc...) asparagine). 2 N-linked (GlcNAc...) asparagine glycosylation sites follow: Asn242 and Asn278. N-linked (GlcNAc...) asparagine glycosylation occurs at Asn316. Cys321 and Cys353 form a disulfide bridge. The segment at 383–408 (YQDEEEEEEDDSQDHTLEGQEETEEH) is disordered. Residues 385 to 394 (DEEEEEEDDS) show a composition bias toward acidic residues. Residues Tyr413 and Tyr414 each carry the sulfotyrosine modification.

The protein belongs to the small leucine-rich proteoglycan (SLRP) family. SLRP class II subfamily. Binds the alpha(V)beta(3)-integrin. Glycosylated; contains keratan sulfate. As to expression, osteoblast and odontoblast. Expressed in femoral bone and calvaria tissues. Detected in femoral head, rib, tendon and bone marrow.

Its subcellular location is the secreted. The protein localises to the extracellular space. The protein resides in the extracellular matrix. In terms of biological role, may be implicated in biomineralization processes. Has a function in binding of osteoblasts via the alpha(V)beta(3)-integrin. This chain is Osteomodulin (Omd), found in Rattus norvegicus (Rat).